A 507-amino-acid chain; its full sequence is Inactive alanine aminotransferase (507 aa).

5 residues coordinate pyridoxal 5'-phosphate: Ala173, Ser174, Tyr199, Asn255, and Ser324. An N6-(pyridoxal phosphate)lysine modification is found at Lys327. Arg336 is a pyridoxal 5'-phosphate binding site.

Belongs to the class-I pyridoxal-phosphate-dependent aminotransferase family. Alanine aminotransferase subfamily. In terms of assembly, homodimer. Pyridoxal 5'-phosphate serves as cofactor.

It localises to the cytoplasm. The protein localises to the nucleus. Inactive alanine aminotransferase. Forms a catalytically active Schiff base with PLP, but lacks alanine transaminase activity, probably due to an altered structural conformation of the dimeric enzyme. This suggests this protein may have a yet undiscovered physiological function. The chain is Inactive alanine aminotransferase (ALT2) from Saccharomyces cerevisiae (strain ATCC 204508 / S288c) (Baker's yeast).